A 237-amino-acid polypeptide reads, in one-letter code: Glutathione-independent glyoxalase HSP31 (237 aa).

Catalysis depends on residues cysteine 138, histidine 139, and glutamate 170. At cysteine 138 the chain carries Cysteine sulfinic acid (-SO2H).

This sequence belongs to the peptidase C56 family. HSP31-like subfamily. Homodimer. Post-translationally, cys-138 is easily oxidized to sulfinic acid.

It localises to the cytoplasm. It is found in the P-body. It carries out the reaction methylglyoxal + H2O = (R)-lactate + H(+). In terms of biological role, catalyzes the conversion of methylglyoxal (MG) to D-lactate in a single glutathione (GSH)-independent step. May play a role in detoxifying endogenously produced glyoxals. Involved in protection against reactive oxygen species (ROS). Important for viability in stationary phase. May negatively regulate TORC1 in response to nutrient limitation. The protein is Glutathione-independent glyoxalase HSP31 of Saccharomyces cerevisiae (strain ATCC 204508 / S288c) (Baker's yeast).